A 719-amino-acid chain; its full sequence is Glycine--tRNA ligase beta subunit (719 aa).

The tract at residues 65-84 (PDREEEIKGPPAKAAFKDGK) is disordered.

Belongs to the class-II aminoacyl-tRNA synthetase family. Tetramer of two alpha and two beta subunits.

The protein resides in the cytoplasm. It carries out the reaction tRNA(Gly) + glycine + ATP = glycyl-tRNA(Gly) + AMP + diphosphate. The polypeptide is Glycine--tRNA ligase beta subunit (Trichodesmium erythraeum (strain IMS101)).